The chain runs to 101 residues: Small ribosomal subunit protein uS14 (101 aa).

This sequence belongs to the universal ribosomal protein uS14 family. Part of the 30S ribosomal subunit. Contacts proteins S3 and S10.

Binds 16S rRNA, required for the assembly of 30S particles and may also be responsible for determining the conformation of the 16S rRNA at the A site. The sequence is that of Small ribosomal subunit protein uS14 from Bordetella petrii (strain ATCC BAA-461 / DSM 12804 / CCUG 43448).